We begin with the raw amino-acid sequence, 161 residues long: Nucleotide-binding protein xcc-b100_3818 (161 aa).

The protein belongs to the YajQ family.

In terms of biological role, nucleotide-binding protein. This Xanthomonas campestris pv. campestris (strain B100) protein is Nucleotide-binding protein xcc-b100_3818.